The primary structure comprises 432 residues: Argininosuccinate lyase (432 aa).

Belongs to the lyase 1 family. Argininosuccinate lyase subfamily.

It localises to the cytoplasm. It carries out the reaction 2-(N(omega)-L-arginino)succinate = fumarate + L-arginine. The protein operates within amino-acid biosynthesis; L-arginine biosynthesis; L-arginine from L-ornithine and carbamoyl phosphate: step 3/3. The chain is Argininosuccinate lyase from Xanthomonas axonopodis pv. citri (strain 306).